Consider the following 173-residue polypeptide: Large ribosomal RNA subunit accumulation protein YceD (173 aa).

This sequence belongs to the DUF177 domain family.

Its function is as follows. Plays a role in synthesis, processing and/or stability of 23S rRNA. The polypeptide is Large ribosomal RNA subunit accumulation protein YceD (yceD) (Escherichia coli O157:H7).